The chain runs to 316 residues: Cytochrome c biogenesis protein CcsA (316 aa).

The next 8 membrane-spanning stretches (helical) occupy residues 12–32 (HISLSIILIVITIFLMNLLVY), 44–64 (GMVASFLCITGLLVIRWIYSG), 71–91 (LYESLMFLSWSFSIFYMIPYF), 98–118 (LNVLTAPGTIFTQGFATSGVL), 145–165 (LSYAALLCGSLLSVALLVILF), 222–242 (VISLGFLFLTIGILSGAVWAN), 256–270 (TWAFITWTIFAIYLH), and 283–303 (AIVASIGFFIIWICYFGVNLL).

It belongs to the CcmF/CycK/Ccl1/NrfE/CcsA family. As to quaternary structure, may interact with Ccs1.

Its subcellular location is the plastid. It localises to the chloroplast thylakoid membrane. Functionally, required during biogenesis of c-type cytochromes (cytochrome c6 and cytochrome f) at the step of heme attachment. The protein is Cytochrome c biogenesis protein CcsA of Ranunculus macranthus (Large buttercup).